Reading from the N-terminus, the 336-residue chain is Phosphoribosylformylglycinamidine cyclo-ligase (336 aa).

This sequence belongs to the AIR synthase family.

The protein localises to the cytoplasm. It carries out the reaction 2-formamido-N(1)-(5-O-phospho-beta-D-ribosyl)acetamidine + ATP = 5-amino-1-(5-phospho-beta-D-ribosyl)imidazole + ADP + phosphate + H(+). Its pathway is purine metabolism; IMP biosynthesis via de novo pathway; 5-amino-1-(5-phospho-D-ribosyl)imidazole from N(2)-formyl-N(1)-(5-phospho-D-ribosyl)glycinamide: step 2/2. In Caldanaerobacter subterraneus subsp. tengcongensis (strain DSM 15242 / JCM 11007 / NBRC 100824 / MB4) (Thermoanaerobacter tengcongensis), this protein is Phosphoribosylformylglycinamidine cyclo-ligase.